Consider the following 555-residue polypeptide: Galectin-3-binding protein (555 aa).

A signal peptide spans 1–18; it reads MAPLRLFWIWLLVVGTRG. In terms of domain architecture, SRCR spans 24-124; it reads MRLADGGSAN…HDKDASVICT (101 aa). 3 disulfide bridges follow: cysteine 49–cysteine 113, cysteine 62–cysteine 123, and cysteine 93–cysteine 103. A glycan (N-linked (GlcNAc...) asparagine) is linked at asparagine 69. N-linked (GlcNAc...) asparagine glycosylation is present at asparagine 125. Residues 153–221 form the BTB domain; that stretch reads CDLFITVKVR…LYSRRIDVSL (69 aa). One can recognise a BACK domain in the interval 260-360; that stretch reads PLELYAYALA…MPPQDLFSLQ (101 aa). N-linked (GlcNAc...) asparagine glycosylation is found at asparagine 362, asparagine 398, and asparagine 550.

In terms of assembly, homodimers and homomultimers. The multimers form ring-like structures with a diameter of 30-40 nm. Binds LGALS1 and LGALS3. Binds ITGB1, COL4A1, COL5A1, COL6A1, FN1 and NID. Interacts with the gamma-tubulin ring complex (gamma-TuRC), composed of gamma-tubulin, TUBGCP2, TUBGCP3, TUBGCP4, TUBGCP5 and TUBGCP6. The unglycosylated form interacts with PDE4DIP; this interaction, which is PDE4DIP isoform-specific, may connect a pericentrosomal complex, made of AKAP9, CDK5RAP2, EB1/MAPRE1 and PDE4DIP, to the gamma-tubulin ring complex (gamma-TuRC) to promote microtubule assembly and acetylation.

The protein localises to the secreted. It localises to the extracellular space. Its subcellular location is the extracellular matrix. Promotes integrin-mediated cell adhesion. May stimulate host defense against viruses and tumor cells. This chain is Galectin-3-binding protein (LGALS3BP), found in Bos taurus (Bovine).